A 402-amino-acid chain; its full sequence is D-mannonate dehydratase (402 aa).

2 residues coordinate substrate: N37 and H122. The active-site Proton donor/acceptor is the Y159. D210 is a Mg(2+) binding site. Catalysis depends on H212, which acts as the Proton donor/acceptor. Mg(2+) contacts are provided by E236 and E262. 5 residues coordinate substrate: E262, R283, H312, D316, and E339.

It belongs to the mandelate racemase/muconate lactonizing enzyme family. GalD subfamily. Mg(2+) serves as cofactor.

It carries out the reaction D-mannonate = 2-dehydro-3-deoxy-D-gluconate + H2O. Its pathway is carbohydrate metabolism; pentose and glucuronate interconversion. Its function is as follows. Catalyzes the dehydration of D-mannonate. Has no detectable activity with a panel of 70 other acid sugars (in vitro). The chain is D-mannonate dehydratase from Rhizorhabdus wittichii (strain DSM 6014 / CCUG 31198 / JCM 15750 / NBRC 105917 / EY 4224 / RW1) (Sphingomonas wittichii).